The primary structure comprises 312 residues: Malate dehydrogenase (312 aa).

NAD(+)-binding positions include 7–12 (GAGNVG) and Asp-32. Residues Arg-82 and Arg-88 each contribute to the substrate site. Residues Asn-95 and 118 to 120 (VSN) contribute to the NAD(+) site. Asn-120 and Arg-151 together coordinate substrate. His-175 (proton acceptor) is an active-site residue.

The protein belongs to the LDH/MDH superfamily. MDH type 3 family.

It carries out the reaction (S)-malate + NAD(+) = oxaloacetate + NADH + H(+). Functionally, catalyzes the reversible oxidation of malate to oxaloacetate. The protein is Malate dehydrogenase of Cytophaga hutchinsonii (strain ATCC 33406 / DSM 1761 / CIP 103989 / NBRC 15051 / NCIMB 9469 / D465).